A 388-amino-acid polypeptide reads, in one-letter code: Formate-dependent phosphoribosylglycinamide formyltransferase (388 aa).

Residues 20 to 21 and E80 each bind N(1)-(5-phospho-beta-D-ribosyl)glycinamide; that span reads EL. ATP is bound by residues R112, K153, 158–163, 193–196, and E201; these read SSGKGQ and EEFI. The 190-residue stretch at 117–306 folds into the ATP-grasp domain; it reads RLAFEKLGLR…EFEIHARAIL (190 aa). E265 and E277 together coordinate Mg(2+). N(1)-(5-phospho-beta-D-ribosyl)glycinamide-binding positions include D284, K352, and 359–360; that span reads RR.

Belongs to the PurK/PurT family. As to quaternary structure, homodimer.

The enzyme catalyses N(1)-(5-phospho-beta-D-ribosyl)glycinamide + formate + ATP = N(2)-formyl-N(1)-(5-phospho-beta-D-ribosyl)glycinamide + ADP + phosphate + H(+). It functions in the pathway purine metabolism; IMP biosynthesis via de novo pathway; N(2)-formyl-N(1)-(5-phospho-D-ribosyl)glycinamide from N(1)-(5-phospho-D-ribosyl)glycinamide (formate route): step 1/1. Involved in the de novo purine biosynthesis. Catalyzes the transfer of formate to 5-phospho-ribosyl-glycinamide (GAR), producing 5-phospho-ribosyl-N-formylglycinamide (FGAR). Formate is provided by PurU via hydrolysis of 10-formyl-tetrahydrofolate. The polypeptide is Formate-dependent phosphoribosylglycinamide formyltransferase (Methanococcus maripaludis (strain DSM 14266 / JCM 13030 / NBRC 101832 / S2 / LL)).